The following is a 556-amino-acid chain: Zinc finger protein 18 (556 aa).

In terms of domain architecture, SCAN box spans 41–123 (RQLFRQFRYQ…TLVESLKGDP (83 aa)). A disordered region spans residues 169-195 (QDLPLQNTSSAPGELLSHGVKEESDLE). The KRAB domain occupies 218-291 (EVGTALLPSL…HLHSAEKMAR (74 aa)). C2H2-type zinc fingers lie at residues 415 to 437 (PTCRECGKTFYRNSQLVFHQRTH), 443 to 465 (FHCRICKKAFLRSSDFVKHQRTH), 471 to 493 (CKCDYCGKGFSDFSGLRHHEKIH), 499 to 521 (YKCPICEKSFIQRSNFNRHQRVH), and 527 to 549 (YKCTHCGKRFSWSSSLDKHQRSH).

Belongs to the krueppel C2H2-type zinc-finger protein family.

Its subcellular location is the nucleus. Functionally, may be involved in transcriptional regulation. The chain is Zinc finger protein 18 (Znf18) from Rattus norvegicus (Rat).